A 221-amino-acid polypeptide reads, in one-letter code: UPF0758 protein ECA0145 (221 aa).

The 123-residue stretch at 99 to 221 (AMLNPEATGQ…FVSFAERGWI (123 aa)) folds into the MPN domain. 3 residues coordinate Zn(2+): histidine 170, histidine 172, and aspartate 183. The JAMM motif motif lies at 170 to 183 (HNHPSGKAEPSQAD).

It belongs to the UPF0758 family. YicR subfamily.

In Pectobacterium atrosepticum (strain SCRI 1043 / ATCC BAA-672) (Erwinia carotovora subsp. atroseptica), this protein is UPF0758 protein ECA0145.